Consider the following 1583-residue polypeptide: MSNPTKISILGRESIIADFGLWRNYVAKDLISDCSSTTYVLVTDTNIGSIYTPSFEEAFRKAAAEITPSPRLLIYNAPPGEVSKSRQTKADIEDWMLSQNPPCGRDTVVIALGGGVIGDLTGFVASTYMRGVRYVQVPTTLLAMVDSSIGGKTAIDTPLGKNLIGAIWQPTKIYIDLEFLETLPVREFINGMAEVIKTAAISSEEEFTALEENAETILKAVRREVRPGEHRFEGIEEILKARILASARHKAYVVSADEREGGLRNLLNWGHSIGHAIEAILTPQILHGECVAIGMVKEAELARHLGILKGVAVSRIVKCLAAYGLPTSLKDARIRKLTAGKHCSVDQLMFNMALDKKNDGPKKKIVLLSAIGTPYETRASVVANEDIRVVLAPSIEVHPGVAQSSNVICAPPGSKSISNRALVLAALGSGTCRIKNLLHSDDTEVMLNALERLGAATFSWEEEGEVLVVNGKGGNLQASSSPLYLGNAGTASRFLTTVATLANSSTVDSSVLTGNNRMKQRPIGDLVDALTANGASIEYVERTGSLPLKIAASGGFAGGNINLAAKVSSQYVSSLLMCAPYAKEPVTLRLVGGKPISQPYIDMTTAMMRSFGIDVQKSTTEEHTYHIPQGRYVNPAEYVIESDASSATYPLAVAAVTGTTCTVPNIGSASLQGDARFAVEVLRPMGCTVEQTETSTTVTGPSDGILRPLPNVDMEPMTDAFLGASVLAAIARGKESNHTTRIYGIANQRVKECNRIKAMKDELAKFGVICREHDDGLEIDGIDRSNLRQPVGGVFCYDDHRVAFSFSVLSLVTPQPTLILEKECVGKTWPGWWDTLRQLFKVKLEGKELEEEPVAASGPDRANASIYIIGMRGAGKSTAGNWVSKALNRPFVDLDTELETVEGMTIPDIIKTRGWQGFRNAELEILKRTLKERSRGYVFACGGGVVEMPEARKLLTDYHKTKGNVLLLMRDIKKIMDFLSIDKTRPAYVEDMMGVWLRRKPWFQECSNIQYYSRDASPSGLARASEDFNRFLQVATGQIDSLSIIKEKEHSFFASLTLPDLREAGDILEEVCVGSDAVELRVDLLKDPASNNDIPSVDYVVEQLSFLRSRVTLPIIFTIRTQSQGGRFPDNAHDAALELYRLAFRSGCEFVDLEIAFPEDMLRAVTEMKGFSKIIASHHDPKGELSWANMSWIKFYNKALEYGDIIKLVGVARNIDDNTALRKFKNWAAEAHDVPLIAINMGDQGQLSRILNGFMTPVSHPSLPFKAAPGQLSATEIRKGLSLMGEIKPKKFAIFGSPISQSRSPALHNTLFAQVGLPHNYTRLETTNAQDVQEFIRSPDFGGASVTIPLKLDIMPLLDEVAAEAEIIGAVNTIIPVSTGKNTPSRLVGRNTDWQGMILSLRKAGVYGPKRKDQEQSALVVGGGGTARAAIYALHNMGYSPIYIVGRTPSKLENMVSTFPSSYNIRIVESPSSFESVPHVAIGTIPADQPIDPTMRETLCHMFERAQEADAEAVKAIEHAPRILLEMAYKPQVTALMRLASDSGWKTIPGLEVLVGQGWYQFKYWTGISPLYESARACSSPLI.

The tract at residues 1-384 is 3-dehydroquinate synthase; it reads MSNPTKISIL…YETRASVVAN (384 aa). Residues 44-46, 81-84, 114-116, and D119 each bind NAD(+); these read DTN, EVSK, and GGV. R130 provides a ligand contact to 7-phospho-2-dehydro-3-deoxy-D-arabino-heptonate. 139–140 contacts NAD(+); that stretch reads TT. Positions 146 and 152 each coordinate 7-phospho-2-dehydro-3-deoxy-D-arabino-heptonate. An NAD(+)-binding site is contributed by K161. N162 contacts 7-phospho-2-dehydro-3-deoxy-D-arabino-heptonate. NAD(+) contacts are provided by residues 179–182 and N190; that span reads FLET. E194 is a Zn(2+) binding site. 7-phospho-2-dehydro-3-deoxy-D-arabino-heptonate contacts are provided by residues 194-197 and K250; that span reads EVIK. E260 acts as the Proton acceptor; for 3-dehydroquinate synthase activity in catalysis. Residues 264–268 and H271 each bind 7-phospho-2-dehydro-3-deoxy-D-arabino-heptonate; that span reads RNLLN. H271 is a binding site for Zn(2+). The Proton acceptor; for 3-dehydroquinate synthase activity role is filled by H275. 7-phospho-2-dehydro-3-deoxy-D-arabino-heptonate is bound by residues H287 and K356. A Zn(2+)-binding site is contributed by H287. An EPSP synthase region spans residues 397–842; the sequence is VHPGVAQSSN…WDTLRQLFKV (446 aa). The active-site For EPSP synthase activity is the C824. The tract at residues 863–1055 is shikimate kinase; sequence NASIYIIGMR…KEKEHSFFAS (193 aa). 870–877 is a binding site for ATP; the sequence is GMRGAGKS. The interval 1056 to 1276 is 3-dehydroquinase; that stretch reads LTLPDLREAG…AAPGQLSATE (221 aa). The active-site Proton acceptor; for 3-dehydroquinate dehydratase activity is H1179. The active-site Schiff-base intermediate with substrate; for 3-dehydroquinate dehydratase activity is the K1207. A shikimate dehydrogenase region spans residues 1289–1583; sequence PKKFAIFGSP…SARACSSPLI (295 aa).

This sequence in the N-terminal section; belongs to the sugar phosphate cyclases superfamily. Dehydroquinate synthase family. The protein in the 2nd section; belongs to the EPSP synthase family. In the 3rd section; belongs to the shikimate kinase family. It in the 4th section; belongs to the type-I 3-dehydroquinase family. This sequence in the C-terminal section; belongs to the shikimate dehydrogenase family. As to quaternary structure, homodimer. Zn(2+) is required as a cofactor.

The protein resides in the cytoplasm. The catalysed reaction is 7-phospho-2-dehydro-3-deoxy-D-arabino-heptonate = 3-dehydroquinate + phosphate. The enzyme catalyses 3-dehydroquinate = 3-dehydroshikimate + H2O. It catalyses the reaction shikimate + NADP(+) = 3-dehydroshikimate + NADPH + H(+). It carries out the reaction shikimate + ATP = 3-phosphoshikimate + ADP + H(+). The catalysed reaction is 3-phosphoshikimate + phosphoenolpyruvate = 5-O-(1-carboxyvinyl)-3-phosphoshikimate + phosphate. Its pathway is metabolic intermediate biosynthesis; chorismate biosynthesis; chorismate from D-erythrose 4-phosphate and phosphoenolpyruvate: step 2/7. The protein operates within metabolic intermediate biosynthesis; chorismate biosynthesis; chorismate from D-erythrose 4-phosphate and phosphoenolpyruvate: step 3/7. It functions in the pathway metabolic intermediate biosynthesis; chorismate biosynthesis; chorismate from D-erythrose 4-phosphate and phosphoenolpyruvate: step 4/7. It participates in metabolic intermediate biosynthesis; chorismate biosynthesis; chorismate from D-erythrose 4-phosphate and phosphoenolpyruvate: step 5/7. Its pathway is metabolic intermediate biosynthesis; chorismate biosynthesis; chorismate from D-erythrose 4-phosphate and phosphoenolpyruvate: step 6/7. Functionally, the AROM polypeptide catalyzes 5 consecutive enzymatic reactions in prechorismate polyaromatic amino acid biosynthesis. The chain is Pentafunctional AROM polypeptide (aromA) from Emericella nidulans (strain FGSC A4 / ATCC 38163 / CBS 112.46 / NRRL 194 / M139) (Aspergillus nidulans).